We begin with the raw amino-acid sequence, 312 residues long: Ribosomal protein L11 methyltransferase (312 aa).

S-adenosyl-L-methionine contacts are provided by T160, G181, D203, and N246.

The protein belongs to the methyltransferase superfamily. PrmA family.

Its subcellular location is the cytoplasm. It carries out the reaction L-lysyl-[protein] + 3 S-adenosyl-L-methionine = N(6),N(6),N(6)-trimethyl-L-lysyl-[protein] + 3 S-adenosyl-L-homocysteine + 3 H(+). Its function is as follows. Methylates ribosomal protein L11. The protein is Ribosomal protein L11 methyltransferase of Staphylococcus aureus (strain COL).